A 158-amino-acid polypeptide reads, in one-letter code: Transcriptional repressor NrdR (158 aa).

Residues 3 to 34 (CPYCGYPDSKVIDSRPTDDNTSIRRRRECLKC) fold into a zinc finger. The region spanning 49–139 (ILVIKKDNRR…VYRQFKDINT (91 aa)) is the ATP-cone domain.

Belongs to the NrdR family. It depends on Zn(2+) as a cofactor.

Its function is as follows. Negatively regulates transcription of bacterial ribonucleotide reductase nrd genes and operons by binding to NrdR-boxes. This is Transcriptional repressor NrdR from Thermoanaerobacter sp. (strain X514).